Reading from the N-terminus, the 371-residue chain is Cytochrome b (371 aa).

The next 8 helical transmembrane spans lie at 25–45, 69–90, 105–125, 170–190, 218–238, 280–300, 312–332, and 339–358; these read FGSM…FLAV, WMMQ…YIHI, WLSG…GXXX, XXXX…XXXX, YKDL…VSFL, LGGA…PFTH, IMQL…WAAT, and FTMI…IMNP. Residues His75 and His89 each coordinate heme b. Xaa174 and Xaa188 together coordinate heme b.

The protein belongs to the cytochrome b family. In terms of assembly, the cytochrome bc1 complex contains 3 respiratory subunits (MT-CYB, CYC1 and UQCRFS1), 2 core proteins (UQCRC1 and UQCRC2) and probably 6 low-molecular weight proteins. The cofactor is heme b.

It localises to the mitochondrion inner membrane. Component of the ubiquinol-cytochrome c reductase complex (complex III or cytochrome b-c1 complex) that is part of the mitochondrial respiratory chain. The b-c1 complex mediates electron transfer from ubiquinol to cytochrome c. Contributes to the generation of a proton gradient across the mitochondrial membrane that is then used for ATP synthesis. The protein is Cytochrome b (MT-CYB) of Eryx tataricus (Tartar sand boa).